Here is a 1097-residue protein sequence, read N- to C-terminus: Kinesin-like protein KIF1C (1097 aa).

The Kinesin motor domain maps to 5–347 (SVKVAVRVRP…LRYADRTKQI (343 aa)). Position 96-103 (96-103 (GQTGAGKS)) interacts with ATP. Ser294 carries the post-translational modification Phosphoserine. The stretch at 358-380 (NARLIRELQEEVARLRELLMAQG) forms a coiled coil. The interval 397 to 434 (GGVLPAASSPPAPASPSSPPPHNGELEPSFSPSAEPQI) is disordered. Residues 404-418 (SSPPAPASPSSPPPH) show a composition bias toward pro residues. Residues 437–478 (EEAMERLQETEKIIAELNETWEEKLRKTEALRMEREALLAEM) are a coiled coil. At Ser491 the chain carries Phosphoserine. The 68-residue stretch at 520–587 (TRVGQVDVDI…LKSGNRIVMG (68 aa)) folds into the FHA domain. Residues 630-671 (EQQGIDIKLEMEKRLQDLENQYRKEKEEADLLLEQQRLYADS) are a coiled coil. Phosphoserine occurs at positions 671 and 673. Positions 824-868 (AEVEDLRAHIDKLTGILQEVKLQNSSKDRELQALRDRMLRMERVI) form a coiled coil. Disordered regions lie at residues 897–921 (EAVSNDHSPAVRPSSPPQSSWERVS) and 946–1097 (QGLQ…GAAV). Phosphoserine is present on Ser911. Gly residues predominate over residues 949-958 (QGSGGRGGGL). Residues 997–1015 (GPQPPEEVTAPPPPPNRRP) show a composition bias toward pro residues. Residues 1016–1026 (PSPRRPHRPRR) show a composition bias toward basic residues. Ser1028 is modified (phosphoserine). Arg1036 bears the Omega-N-methylarginine mark. A compositionally biased stretch (pro residues) spans 1059–1077 (QPQPYPAQRPGPRYPPYTT). Thr1077 bears the Phosphothreonine mark. At Ser1086 the chain carries Phosphoserine. The span at 1086–1097 (SAPDLKESGAAV) shows a compositional bias: basic and acidic residues.

The protein belongs to the TRAFAC class myosin-kinesin ATPase superfamily. Kinesin family. Unc-104 subfamily.

It is found in the cytoplasm. The protein localises to the cytoskeleton. Its function is as follows. Probable motor protein. This Rattus norvegicus (Rat) protein is Kinesin-like protein KIF1C (Kif1c).